Consider the following 284-residue polypeptide: MGEPWAARGTEGAPARMPVVFTALWAAVVVLELTYVMVLGPGPPPLEPLARALQLALAAYQLLNLLGNMGLFLRSDPSIRGVMLAGRGLGQGWAYCYQCQSQVPPRSGHCSACRVCILRRDHHCRLLGRCVGFHNYRPFLCLLLHAAGVLLHISVLLSPALSALLQAHSALYTVALLLLPWLMLLTGKVSLAQFALAFVVDTCVAGALLCGAGLLFHGMLLLRGQTTWEWARGQHSYDLGMSHNLQAALGPRWALVWFWPFLASPLPGDGITFQTPTDVGLVTS.

The Cytoplasmic portion of the chain corresponds to 1 to 18 (MGEPWAARGTEGAPARMP). The helical transmembrane segment at 19-39 (VVFTALWAAVVVLELTYVMVL) threads the bilayer. Topologically, residues 40–52 (GPGPPPLEPLARA) are extracellular. A helical membrane pass occupies residues 53-73 (LQLALAAYQLLNLLGNMGLFL). Residues 74-137 (RSDPSIRGVM…GRCVGFHNYR (64 aa)) are Cytoplasmic-facing. The DHHC domain maps to 94-144 (AYCYQCQSQVPPRSGHCSACRVCILRRDHHCRLLGRCVGFHNYRPFLCLLL). Residue cysteine 124 is the S-palmitoyl cysteine intermediate of the active site. A helical transmembrane segment spans residues 138–158 (PFLCLLLHAAGVLLHISVLLS). Residues 159-166 (PALSALLQ) lie on the Extracellular side of the membrane. A helical transmembrane segment spans residues 167–187 (AHSALYTVALLLLPWLMLLTG). At 188 to 195 (KVSLAQFA) the chain is on the cytoplasmic side. A helical membrane pass occupies residues 196-216 (LAFVVDTCVAGALLCGAGLLF). At 217-284 (HGMLLLRGQT…TPTDVGLVTS (68 aa)) the chain is on the extracellular side.

Belongs to the DHHC palmitoyltransferase family.

It localises to the membrane. The catalysed reaction is L-cysteinyl-[protein] + hexadecanoyl-CoA = S-hexadecanoyl-L-cysteinyl-[protein] + CoA. Functionally, probable palmitoyltransferase that could catalyze the addition of palmitate onto various protein substrates. The polypeptide is Probable palmitoyltransferase ZDHHC24 (Zdhhc24) (Rattus norvegicus (Rat)).